The chain runs to 225 residues: Ribonuclease 3 (225 aa).

The region spanning 7-129 is the RNase III domain; that stretch reads LPRLGRILGY…IIGAIYLDAD (123 aa). E42 is a binding site for Mg(2+). Residue D46 is part of the active site. Positions 115 and 118 each coordinate Mg(2+). Residue E118 is part of the active site. The DRBM domain maps to 155–225; that stretch reads DPKTLLQEHL…AAEVLERIKK (71 aa).

The protein belongs to the ribonuclease III family. As to quaternary structure, homodimer. The cofactor is Mg(2+).

The protein localises to the cytoplasm. It catalyses the reaction Endonucleolytic cleavage to 5'-phosphomonoester.. Digests double-stranded RNA. Involved in the processing of primary rRNA transcript to yield the immediate precursors to the large and small rRNAs (23S and 16S). Processes some mRNAs, and tRNAs when they are encoded in the rRNA operon. Processes pre-crRNA and tracrRNA of type II CRISPR loci if present in the organism. This Shewanella loihica (strain ATCC BAA-1088 / PV-4) protein is Ribonuclease 3.